We begin with the raw amino-acid sequence, 407 residues long: Probable peptidoglycan glycosyltransferase FtsW (407 aa).

Topologically, residues 1-25 are cytoplasmic; it reads MSIDFRNIIKPYPSPIITGRGIDLD. A helical transmembrane segment spans residues 26–46; that stretch reads FPMLAGCLALLGLGLVMITSA. Residues 47–65 are Periplasmic-facing; that stretch reads SSEVAAVQSGNTLYMMIRH. A helical transmembrane segment spans residues 66–86; it reads LVYLVIGLGACIVTMMIPIAT. At 87–89 the chain is on the cytoplasmic side; it reads WQR. A helical membrane pass occupies residues 90–110; that stretch reads LGWLMLIGAFGLLIMVILPGI. The Periplasmic segment spans residues 111 to 119; it reads GREVNGSMR. Residues 120 to 140 traverse the membrane as a helical segment; it reads WIGFGAFNVQPSEIAKVFVVI. The Cytoplasmic portion of the chain corresponds to 141–155; that stretch reads YLAGYLVRRQKEVRE. Residues 156–176 form a helical membrane-spanning segment; the sequence is SWMGFFKPFIVLLPMAGLLLM. Over 177-181 the chain is Periplasmic; sequence EPDFG. The helical transmembrane segment at 182-202 threads the bilayer; it reads ATVVMMGAAAAMLFLGGVGLF. A topological domain (cytoplasmic) is located at residue Arg203. A helical transmembrane segment spans residues 204–224; that stretch reads FTLMVVLAVAAVTVLVQAQPY. The Periplasmic segment spans residues 225–283; sequence RMARLITFTDPWSDQFGSGYQLTQALIAFGRGEWLGVGLGNSVQKQFYLPEAHTDFVFS. Residues 284 to 304 traverse the membrane as a helical segment; the sequence is VLAEELGVVGSLCTVALFVFV. Residues 305-321 are Cytoplasmic-facing; sequence CVRGMYIGMWAEKAKQY. A helical transmembrane segment spans residues 322 to 342; it reads FAAYVAYGLSFLWIGQFLINI. Over 343 to 355 the chain is Periplasmic; it reads GVNVGLLPTKGLT. Residues 356–376 form a helical membrane-spanning segment; that stretch reads LPFLSYGGSSLVICCACLGLL. Over 377 to 407 the chain is Cytoplasmic; that stretch reads LRIEWESRTHLGSEEMEFSESDFAEEPTHGR.

This sequence belongs to the SEDS family. FtsW subfamily.

It is found in the cell inner membrane. The enzyme catalyses [GlcNAc-(1-&gt;4)-Mur2Ac(oyl-L-Ala-gamma-D-Glu-L-Lys-D-Ala-D-Ala)](n)-di-trans,octa-cis-undecaprenyl diphosphate + beta-D-GlcNAc-(1-&gt;4)-Mur2Ac(oyl-L-Ala-gamma-D-Glu-L-Lys-D-Ala-D-Ala)-di-trans,octa-cis-undecaprenyl diphosphate = [GlcNAc-(1-&gt;4)-Mur2Ac(oyl-L-Ala-gamma-D-Glu-L-Lys-D-Ala-D-Ala)](n+1)-di-trans,octa-cis-undecaprenyl diphosphate + di-trans,octa-cis-undecaprenyl diphosphate + H(+). The protein operates within cell wall biogenesis; peptidoglycan biosynthesis. In terms of biological role, peptidoglycan polymerase that is essential for cell division. The polypeptide is Probable peptidoglycan glycosyltransferase FtsW (Pseudomonas fluorescens (strain SBW25)).